The following is a 210-amino-acid chain: Tissue inhibitor of metalloproteinase (210 aa).

Positions M1–A27 are cleaved as a signal peptide. Position 28 (C28) interacts with Zn(2+). Involved in metalloproteinase-binding regions lie at residues C28–M31 and D93–A94. Cystine bridges form between C28–C96, C30–C118, C145–C195, C150–C155, and C165–C180. One can recognise an NTR domain in the interval C28–C145.

The protein belongs to the protease inhibitor I35 (TIMP) family. As to expression, expressed in heads of female and male adult flies. Expressed at the time of eclosion in unopened wings of adult flies. Strongly expressed at the tip of ovarian germarium region 1 where germline stem cells (GSCs) and cystoblasts reside and in region 2 of the germarium.

It localises to the secreted. Functionally, metalloproteinase inhibitor that acts on both matrix metalloproteinases Mmp1 and Mmp2 in vitro. Complexes with metalloproteinases and irreversibly inactivates them by binding to their catalytic zinc cofactor. Required for wing maturation which is the final step in morphogenesis of the adult fly. Involved in the negative regulation of developmental tissue invasion for imaginal disk eversion during metamorphosis by inhibiting Mmp-mediated basement membrane (BM) degradation. Required for oogenesis and for the long-term maintainance of germarial structure and shape in the adult ovaries. Required for maintaining composition and biophysical properties of the extracellular matrix (ECM), and for the normal organization and cyst production of the germline stem cell (GSC) niche. In Drosophila melanogaster (Fruit fly), this protein is Tissue inhibitor of metalloproteinase.